Here is an 83-residue protein sequence, read N- to C-terminus: uncharacterized protein (83 aa).

This is an uncharacterized protein from Treponema pallidum (strain Nichols).